The sequence spans 284 residues: 4-diphosphocytidyl-2-C-methyl-D-erythritol kinase (284 aa).

Lysine 22 is a catalytic residue. Proline 104–serine 114 is an ATP binding site. The active site involves aspartate 146.

This sequence belongs to the GHMP kinase family. IspE subfamily.

The catalysed reaction is 4-CDP-2-C-methyl-D-erythritol + ATP = 4-CDP-2-C-methyl-D-erythritol 2-phosphate + ADP + H(+). It functions in the pathway isoprenoid biosynthesis; isopentenyl diphosphate biosynthesis via DXP pathway; isopentenyl diphosphate from 1-deoxy-D-xylulose 5-phosphate: step 3/6. Functionally, catalyzes the phosphorylation of the position 2 hydroxy group of 4-diphosphocytidyl-2C-methyl-D-erythritol. The polypeptide is 4-diphosphocytidyl-2-C-methyl-D-erythritol kinase (Hydrogenobaculum sp. (strain Y04AAS1)).